Here is a 133-residue protein sequence, read N- to C-terminus: Type VI secretion amidase effector 2 protein (133 aa).

Residues Cys-23 and His-73 contribute to the active site.

Belongs to the cell wall amidase Dae2/Tae2-like family.

Its subcellular location is the host periplasm. The protein localises to the secreted. It functions in the pathway cell wall degradation; peptidoglycan degradation. Its function is as follows. Toxic component of a contact-dependent interbacterial competition system (also called effector-immunity systems). Secreted by the SPI-6 type VI secretion system, probably into the periplasm of bacterial target cells. A cell wall amidase with specificity toward the D-meso-DAP-D-alanine bond (D-meso-diaminopimelic-D-alanine) found in peptidoglycan of Gram-negative bacteria. Toxicity is counteracted by a cognate immunity protein Tai2 (t2585), but not immunity proteins associated with a similar endopeptidase in other bacteria. In vitro degrades peptidoglycans from Gram-negative but not Gram-positive bacteria. The protein is Type VI secretion amidase effector 2 protein of Salmonella typhi.